Consider the following 246-residue polypeptide: Pyridoxine 5'-phosphate synthase (246 aa).

Residue Asn-12 coordinates 3-amino-2-oxopropyl phosphate. 14–15 (DH) is a binding site for 1-deoxy-D-xylulose 5-phosphate. Arg-23 contacts 3-amino-2-oxopropyl phosphate. The Proton acceptor role is filled by His-48. Residues Arg-50 and His-55 each contribute to the 1-deoxy-D-xylulose 5-phosphate site. Glu-75 (proton acceptor) is an active-site residue. Residue Thr-105 participates in 1-deoxy-D-xylulose 5-phosphate binding. His-196 (proton donor) is an active-site residue. Residues Gly-197 and 218–219 (GH) contribute to the 3-amino-2-oxopropyl phosphate site.

Belongs to the PNP synthase family. As to quaternary structure, homooctamer; tetramer of dimers.

The protein localises to the cytoplasm. It catalyses the reaction 3-amino-2-oxopropyl phosphate + 1-deoxy-D-xylulose 5-phosphate = pyridoxine 5'-phosphate + phosphate + 2 H2O + H(+). It participates in cofactor biosynthesis; pyridoxine 5'-phosphate biosynthesis; pyridoxine 5'-phosphate from D-erythrose 4-phosphate: step 5/5. Functionally, catalyzes the complicated ring closure reaction between the two acyclic compounds 1-deoxy-D-xylulose-5-phosphate (DXP) and 3-amino-2-oxopropyl phosphate (1-amino-acetone-3-phosphate or AAP) to form pyridoxine 5'-phosphate (PNP) and inorganic phosphate. The sequence is that of Pyridoxine 5'-phosphate synthase from Pseudomonas syringae pv. syringae (strain B728a).